A 154-amino-acid chain; its full sequence is Probable chemoreceptor glutamine deamidase CheD (154 aa).

This sequence belongs to the CheD family.

The catalysed reaction is L-glutaminyl-[protein] + H2O = L-glutamyl-[protein] + NH4(+). Probably deamidates glutamine residues to glutamate on methyl-accepting chemotaxis receptors (MCPs), playing an important role in chemotaxis. This chain is Probable chemoreceptor glutamine deamidase CheD, found in Methanococcus maripaludis (strain DSM 14266 / JCM 13030 / NBRC 101832 / S2 / LL).